The following is a 373-amino-acid chain: Mating-type protein A-2 (373 aa).

A disordered region spans residues 1 to 22; sequence MNLLNMQPKRSEQPAMFEENRA.

This sequence to P.anserina SMR1.

Its function is as follows. Required, together with mating-type protein A-3, for efficient ascospore formation. In Neurospora crassa (strain ATCC 24698 / 74-OR23-1A / CBS 708.71 / DSM 1257 / FGSC 987), this protein is Mating-type protein A-2 (matA-2).